The sequence spans 312 residues: Probable deoxyhypusine synthase (312 aa).

Lysine 285 (nucleophile) is an active-site residue.

The protein belongs to the deoxyhypusine synthase family. NAD(+) is required as a cofactor.

It carries out the reaction [eIF5A protein]-L-lysine + spermidine = [eIF5A protein]-deoxyhypusine + propane-1,3-diamine. It participates in protein modification; eIF5A hypusination. In terms of biological role, catalyzes the NAD-dependent oxidative cleavage of spermidine and the subsequent transfer of the butylamine moiety of spermidine to the epsilon-amino group of a specific lysine residue of the eIF-5A precursor protein to form the intermediate deoxyhypusine residue. The polypeptide is Probable deoxyhypusine synthase (Saccharolobus islandicus (strain M.16.4 / Kamchatka #3) (Sulfolobus islandicus)).